Reading from the N-terminus, the 45-residue chain is MSKRTFQPNNRRRARTHGFRLRMRTRAGRAILSARRRKGRSELSA.

Belongs to the bacterial ribosomal protein bL34 family.

This Frankia casuarinae (strain DSM 45818 / CECT 9043 / HFP020203 / CcI3) protein is Large ribosomal subunit protein bL34.